Reading from the N-terminus, the 368-residue chain is Agmatine deiminase (368 aa).

Catalysis depends on cysteine 357, which acts as the Amidino-cysteine intermediate.

This sequence belongs to the agmatine deiminase family. Homodimer.

The enzyme catalyses agmatine + H2O = N-carbamoylputrescine + NH4(+). Its pathway is amine and polyamine biosynthesis; putrescine biosynthesis via agmatine pathway; N-carbamoylputrescine from agmatine: step 1/1. Its function is as follows. Mediates the hydrolysis of agmatine into N-carbamoylputrescine in the arginine decarboxylase (ADC) pathway of putrescine biosynthesis, a basic polyamine. The polypeptide is Agmatine deiminase (Stutzerimonas stutzeri (strain A1501) (Pseudomonas stutzeri)).